Reading from the N-terminus, the 597-residue chain is Arginine--tRNA ligase (597 aa).

The short motif at 138–148 (ANPTGPMHVGH) is the 'HIGH' region element.

This sequence belongs to the class-I aminoacyl-tRNA synthetase family. As to quaternary structure, monomer.

It localises to the cytoplasm. The catalysed reaction is tRNA(Arg) + L-arginine + ATP = L-arginyl-tRNA(Arg) + AMP + diphosphate. This is Arginine--tRNA ligase from Rhodopseudomonas palustris (strain ATCC BAA-98 / CGA009).